Consider the following 244-residue polypeptide: Glucosamine-6-phosphate deaminase (244 aa).

Asp67 acts as the Proton acceptor; for enolization step in catalysis. The active-site For ring-opening step is Asn133. His135 serves as the catalytic Proton acceptor; for ring-opening step. Glu140 (for ring-opening step) is an active-site residue.

Belongs to the glucosamine/galactosamine-6-phosphate isomerase family. NagB subfamily.

The catalysed reaction is alpha-D-glucosamine 6-phosphate + H2O = beta-D-fructose 6-phosphate + NH4(+). It participates in amino-sugar metabolism; N-acetylneuraminate degradation; D-fructose 6-phosphate from N-acetylneuraminate: step 5/5. Its function is as follows. Catalyzes the reversible isomerization-deamination of glucosamine 6-phosphate (GlcN6P) to form fructose 6-phosphate (Fru6P) and ammonium ion. The protein is Glucosamine-6-phosphate deaminase of Mycoplasma mycoides subsp. mycoides SC (strain CCUG 32753 / NCTC 10114 / PG1).